The primary structure comprises 150 residues: UPF0208 membrane protein VS_0999 (150 aa).

The next 2 helical transmembrane spans lie at 42–62 (FGVK…MVFN) and 70–90 (AVVM…WLGN).

Belongs to the UPF0208 family.

It localises to the cell inner membrane. This is UPF0208 membrane protein VS_0999 from Vibrio atlanticus (strain LGP32) (Vibrio splendidus (strain Mel32)).